Consider the following 425-residue polypeptide: Oxalate decarboxylase ARB_02208 (425 aa).

The first 19 residues, 1-19 (MKFGSALVAAVAAVAGVAA), serve as a signal peptide directing secretion. The 164-residue stretch at 73–236 (FSLSKTRMFH…FNISTGGTFD (164 aa)) folds into the Cupin type-1 1 domain. Mn(2+) contacts are provided by H116, H118, E122, and H161. N228, N247, N254, and N265 each carry an N-linked (GlcNAc...) asparagine glycan. Positions 270-414 (FHIRDAPEIQ…AINVPIDVID (145 aa)) constitute a Cupin type-1 2 domain. 4 residues coordinate Mn(2+): H317, H319, E324, and H363. N-linked (GlcNAc...) asparagine glycosylation occurs at N367. Residue E378 is the Proton donor of the active site.

Mn(2+) serves as cofactor.

It is found in the secreted. It carries out the reaction oxalate + H(+) = formate + CO2. Functionally, converts oxalate to formate and CO(2) in an O(2)-dependent reaction. Can also catalyze minor side reactions: oxalate oxidation to produce H(2)O(2), and oxalate-dependent, H(2)O(2)-independent dye oxidations. The protein is Oxalate decarboxylase ARB_02208 of Arthroderma benhamiae (strain ATCC MYA-4681 / CBS 112371) (Trichophyton mentagrophytes).